A 154-amino-acid chain; its full sequence is MKIYEGKLIAEGKKFGIVVSRFNEFITNKLLEGALDALKRHGALNEDIEIAWVPGAFEIPLIAKKMAESKRYDAVIALGAVIRGETPHFDYVANEVSKGIAKISLDTEVPVIFGVLTTDTIEQAIVRAGTKGGNKGFEAAVTAIEMANLMEEIK.

5-amino-6-(D-ribitylamino)uracil-binding positions include F22, A56–E58, and A80–I82. (2S)-2-hydroxy-3-oxobutyl phosphate is bound at residue E85 to T86. H88 functions as the Proton donor in the catalytic mechanism. F113 provides a ligand contact to 5-amino-6-(D-ribitylamino)uracil. A (2S)-2-hydroxy-3-oxobutyl phosphate-binding site is contributed by R127.

The protein belongs to the DMRL synthase family.

It carries out the reaction (2S)-2-hydroxy-3-oxobutyl phosphate + 5-amino-6-(D-ribitylamino)uracil = 6,7-dimethyl-8-(1-D-ribityl)lumazine + phosphate + 2 H2O + H(+). The protein operates within cofactor biosynthesis; riboflavin biosynthesis; riboflavin from 2-hydroxy-3-oxobutyl phosphate and 5-amino-6-(D-ribitylamino)uracil: step 1/2. In terms of biological role, catalyzes the formation of 6,7-dimethyl-8-ribityllumazine by condensation of 5-amino-6-(D-ribitylamino)uracil with 3,4-dihydroxy-2-butanone 4-phosphate. This is the penultimate step in the biosynthesis of riboflavin. This is 6,7-dimethyl-8-ribityllumazine synthase from Thermoanaerobacter pseudethanolicus (strain ATCC 33223 / 39E) (Clostridium thermohydrosulfuricum).